The primary structure comprises 236 residues: Ribosome-inactivating protein saporin-3 (236 aa).

Residue glutamate 148 is part of the active site.

Belongs to the ribosome-inactivating protein family. Type 1 RIP subfamily.

It catalyses the reaction Endohydrolysis of the N-glycosidic bond at one specific adenosine on the 28S rRNA.. Its function is as follows. Ribosome-inactivating protein of type 1, inhibits protein synthesis in animal cells. Useful as immunotoxin for pharmacological applications. This Saponaria officinalis (Common soapwort) protein is Ribosome-inactivating protein saporin-3 (SAP3).